Here is a 415-residue protein sequence, read N- to C-terminus: Glucose-1-phosphate adenylyltransferase (415 aa).

Residues Tyr-100, Gly-165, 182–183, and Ser-200 each bind alpha-D-glucose 1-phosphate; that span reads EK.

Belongs to the bacterial/plant glucose-1-phosphate adenylyltransferase family. Homotetramer.

It catalyses the reaction alpha-D-glucose 1-phosphate + ATP + H(+) = ADP-alpha-D-glucose + diphosphate. It participates in glycan biosynthesis; glycogen biosynthesis. Its function is as follows. Involved in the biosynthesis of ADP-glucose, a building block required for the elongation reactions to produce glycogen. Catalyzes the reaction between ATP and alpha-D-glucose 1-phosphate (G1P) to produce pyrophosphate and ADP-Glc. The sequence is that of Glucose-1-phosphate adenylyltransferase from Bifidobacterium animalis subsp. lactis (strain AD011).